We begin with the raw amino-acid sequence, 455 residues long: Fumarate hydratase class II (455 aa).

Substrate-binding positions include 96–98 (SGT), 122–125 (HPND), 132–134 (SSN), and threonine 180. The active-site Proton donor/acceptor is the histidine 181. The active site involves serine 311. Residues serine 312 and 317–319 (KVN) each bind substrate.

Belongs to the class-II fumarase/aspartase family. Fumarase subfamily. Homotetramer.

The protein localises to the cytoplasm. It catalyses the reaction (S)-malate = fumarate + H2O. It functions in the pathway carbohydrate metabolism; tricarboxylic acid cycle; (S)-malate from fumarate: step 1/1. Involved in the TCA cycle. Catalyzes the stereospecific interconversion of fumarate to L-malate. This Listeria monocytogenes serovar 1/2a (strain ATCC BAA-679 / EGD-e) protein is Fumarate hydratase class II.